The chain runs to 344 residues: D-beta-hydroxybutyrate dehydrogenase, mitochondrial (344 aa).

A mitochondrion-targeting transit peptide spans 1-46 (MLTARLSRPLSQLPRKTLNFSDRENGTRGSLLLYSAPFVPVGRRTY). Residue 59–83 (LITGCDSGFGFSLAKHLHSEGFLVF) participates in NAD(+) binding. 2 positions are modified to N6-acetyllysine: Lys73 and Lys97. Lys103 is subject to N6-acetyllysine; alternate. Lys103 carries the N6-succinyllysine; alternate modification. The residue at position 177 (Lys177) is an N6-acetyllysine. A substrate-binding site is contributed by Ser195. The active-site Proton acceptor is the Tyr208. The residue at position 212 (Lys212) is an N6-acetyllysine. Ser219 carries O-linked (GlcNAc) serine glycosylation. Ser246 is subject to Phosphoserine. At Lys260 the chain carries N6-acetyllysine; alternate. An N6-succinyllysine; alternate modification is found at Lys260. At Lys281 the chain carries N6-acetyllysine.

Belongs to the short-chain dehydrogenases/reductases (SDR) family. In terms of assembly, homotetramer.

The protein localises to the mitochondrion inner membrane. Its subcellular location is the mitochondrion matrix. It carries out the reaction (R)-3-hydroxybutanoate + NAD(+) = acetoacetate + NADH + H(+). Its activity is regulated as follows. Requires phosphatidylcholine as an allosteric activator for enzymatic activity. The chain is D-beta-hydroxybutyrate dehydrogenase, mitochondrial from Bos taurus (Bovine).